The chain runs to 219 residues: Beta-crystallin B2 (219 aa).

The residue at position 2 (Ala-2) is an N-acetylalanine. The interval 2–16 (ASEHQMPASKQQPAS) is N-terminal arm. 2 Beta/gamma crystallin 'Greek key' domains span residues 17 to 56 (PNIA…LVHS) and 57 to 101 (GPWV…RPIK). The tract at residues 102–120 (VVRAPRQPLPTRQTKDSQE) is connecting peptide. Beta/gamma crystallin 'Greek key' domains follow at residues 121-162 (HKIV…RVQS) and 163-205 (GTWV…RRIR). The C-terminal arm stretch occupies residues 207-219 (MQWHQRGAYHPSN).

Belongs to the beta/gamma-crystallin family. Homo/heterodimer, or complexes of higher-order. The structure of beta-crystallin oligomers seems to be stabilized through interactions between the N-terminal arms.

In terms of biological role, crystallins are the dominant structural components of the vertebrate eye lens. This is Beta-crystallin B2 (CRYBB2) from Gallus gallus (Chicken).